The chain runs to 368 residues: Heme A synthase (368 aa).

A run of 5 helical transmembrane segments spans residues 14–34 (AVRI…LVGG), 104–124 (VIGI…AIGP), 129–149 (ALWI…WMVA), 161–181 (VRLA…VWTL), and 200–220 (ALAL…VAGL). A heme-binding site is contributed by histidine 264. 3 consecutive transmembrane segments (helical) span residues 266–283 (MLAY…IDAL), 296–316 (FLAL…AAPI), and 318–338 (LALV…LQAE). Histidine 322 provides a ligand contact to heme.

It belongs to the COX15/CtaA family. Type 2 subfamily. In terms of assembly, interacts with CtaB. Heme b is required as a cofactor.

The protein resides in the cell membrane. It catalyses the reaction Fe(II)-heme o + 2 A + H2O = Fe(II)-heme a + 2 AH2. Its pathway is porphyrin-containing compound metabolism; heme A biosynthesis; heme A from heme O: step 1/1. Functionally, catalyzes the conversion of heme O to heme A by two successive hydroxylations of the methyl group at C8. The first hydroxylation forms heme I, the second hydroxylation results in an unstable dihydroxymethyl group, which spontaneously dehydrates, resulting in the formyl group of heme A. The chain is Heme A synthase from Rhodopseudomonas palustris (strain ATCC BAA-98 / CGA009).